Reading from the N-terminus, the 422-residue chain is Histidine--tRNA ligase (422 aa).

Belongs to the class-II aminoacyl-tRNA synthetase family. Homodimer.

It is found in the cytoplasm. It catalyses the reaction tRNA(His) + L-histidine + ATP = L-histidyl-tRNA(His) + AMP + diphosphate + H(+). This is Histidine--tRNA ligase from Vibrio parahaemolyticus serotype O3:K6 (strain RIMD 2210633).